Consider the following 561-residue polypeptide: Arginine--tRNA ligase (561 aa).

A 'HIGH' region motif is present at residues 129 to 139 (ANPTGPLHVGH).

This sequence belongs to the class-I aminoacyl-tRNA synthetase family. As to quaternary structure, monomer.

It localises to the cytoplasm. The catalysed reaction is tRNA(Arg) + L-arginine + ATP = L-arginyl-tRNA(Arg) + AMP + diphosphate. The protein is Arginine--tRNA ligase of Bordetella parapertussis (strain 12822 / ATCC BAA-587 / NCTC 13253).